A 389-amino-acid chain; its full sequence is Histidinol-phosphate aminotransferase (389 aa).

Lys-233 bears the N6-(pyridoxal phosphate)lysine mark.

This sequence belongs to the class-II pyridoxal-phosphate-dependent aminotransferase family. It depends on pyridoxal 5'-phosphate as a cofactor.

The enzyme catalyses L-histidinol phosphate + 2-oxoglutarate = 3-(imidazol-4-yl)-2-oxopropyl phosphate + L-glutamate. The protein operates within amino-acid biosynthesis; L-histidine biosynthesis; L-histidine from 5-phospho-alpha-D-ribose 1-diphosphate: step 7/9. The sequence is that of Histidinol-phosphate aminotransferase (HIS5) from Candida maltosa (Yeast).